Here is a 245-residue protein sequence, read N- to C-terminus: 1-(5-phosphoribosyl)-5-[(5-phosphoribosylamino)methylideneamino] imidazole-4-carboxamide isomerase (245 aa).

Asp-7 (proton acceptor) is an active-site residue. Catalysis depends on Asp-129, which acts as the Proton donor.

Belongs to the HisA/HisF family.

The protein localises to the cytoplasm. It carries out the reaction 1-(5-phospho-beta-D-ribosyl)-5-[(5-phospho-beta-D-ribosylamino)methylideneamino]imidazole-4-carboxamide = 5-[(5-phospho-1-deoxy-D-ribulos-1-ylimino)methylamino]-1-(5-phospho-beta-D-ribosyl)imidazole-4-carboxamide. It participates in amino-acid biosynthesis; L-histidine biosynthesis; L-histidine from 5-phospho-alpha-D-ribose 1-diphosphate: step 4/9. The polypeptide is 1-(5-phosphoribosyl)-5-[(5-phosphoribosylamino)methylideneamino] imidazole-4-carboxamide isomerase (Aliivibrio fischeri (strain ATCC 700601 / ES114) (Vibrio fischeri)).